Here is a 490-residue protein sequence, read N- to C-terminus: Glutamate--tRNA ligase 1 (490 aa).

Positions 27-37 (PSPTGYLHIGG) match the 'HIGH' region motif. The 'KMSKS' region motif lies at 254 to 258 (KLSKR). Lys-257 lines the ATP pocket.

The protein belongs to the class-I aminoacyl-tRNA synthetase family. Glutamate--tRNA ligase type 1 subfamily. In terms of assembly, monomer.

The protein localises to the cytoplasm. It catalyses the reaction tRNA(Glu) + L-glutamate + ATP = L-glutamyl-tRNA(Glu) + AMP + diphosphate. Its function is as follows. Catalyzes the attachment of glutamate to tRNA(Glu) in a two-step reaction: glutamate is first activated by ATP to form Glu-AMP and then transferred to the acceptor end of tRNA(Glu). This is Glutamate--tRNA ligase 1 from Sphingopyxis alaskensis (strain DSM 13593 / LMG 18877 / RB2256) (Sphingomonas alaskensis).